The sequence spans 471 residues: Splicing factor 3A subunit 2 (471 aa).

Position 1 is an N-acetylmethionine (methionine 1). Residues 1 to 27 (MDFQHRPGGKTGSGGVASSSESNRDRR) are disordered. At lysine 10 the chain carries N6-acetyllysine. The segment at 54–84 (YECKLCLTLHNNEGSYLAHTQGKKHQTNLAR) adopts a Matrin-type zinc-finger fold. Serine 153 carries the post-translational modification Phosphoserine. 4 stretches are compositionally biased toward pro residues: residues 217–295 (PPAP…PVVH), 303–316 (PPAP…PVVH), 324–383 (PPAP…PPPS), and 437–471 (HPQP…PPGN). Residues 217–471 (PPAPPSLPAG…GNMPPPPPGN (255 aa)) form a disordered region.

It belongs to the SF3A2 family. Component of the 17S U2 SnRNP complex, a ribonucleoprotein complex that contains small nuclear RNA (snRNA) U2 and a number of specific proteins. Part of the SF3A subcomplex of the 17S U2 SnRNP complex which is composed of three subunits; SF3A3/SAP61, SF3A2/SAP62 and SF3A1/SAP114. SF3A associates with the splicing factor SF3B and a 12S RNA unit to form the mature 17S U2 small nuclear ribonucleoprotein complex (17S U2 snRNP). Identified in the spliceosome 'E' complex, a precursor of the spliceosome 'A' complex. Identified in the spliceosome 'A' and 'B' complexes. Identified in the spliceosome 'C' complex. Interacts with HTATSF1.

The protein localises to the nucleus. In terms of biological role, component of the 17S U2 SnRNP complex of the spliceosome, a large ribonucleoprotein complex that removes introns from transcribed pre-mRNAs. The 17S U2 SnRNP complex (1) directly participates in early spliceosome assembly and (2) mediates recognition of the intron branch site during pre-mRNA splicing by promoting the selection of the pre-mRNA branch-site adenosine, the nucleophile for the first step of splicing. Within the 17S U2 SnRNP complex, SF3A2 is part of the SF3A subcomplex that contributes to the assembly of the 17S U2 snRNP, and the subsequent assembly of the pre-spliceosome 'E' complex and the pre-catalytic spliceosome 'A' complex. Involved in pre-mRNA splicing as a component of pre-catalytic spliceosome 'B' complexes, including the Bact complex. Interacts directly with the duplex formed by U2 snRNA and the intron. The chain is Splicing factor 3A subunit 2 (Sf3a2) from Rattus norvegicus (Rat).